The following is a 352-amino-acid chain: C-C chemokine receptor type 5 (352 aa).

The Extracellular portion of the chain corresponds to methionine 1–alanine 30. Tyrosine 3 is modified (sulfotyrosine). 2 O-linked (GalNAc...) serine glycosylation sites follow: serine 6 and serine 7. A sulfotyrosine mark is found at tyrosine 10, tyrosine 14, and tyrosine 15. 2 disulfides stabilise this stretch: cysteine 20–cysteine 269 and cysteine 101–cysteine 178. The chain crosses the membrane as a helical span at residues arginine 31 to cysteine 58. Residues lysine 59–tyrosine 68 lie on the Cytoplasmic side of the membrane. Residues leucine 69–tyrosine 89 form a helical membrane-spanning segment. At alanine 90–glutamine 102 the chain is on the extracellular side. A helical membrane pass occupies residues leucine 103–isoleucine 124. The Cytoplasmic portion of the chain corresponds to aspartate 125–threonine 141. A helical membrane pass occupies residues valine 142 to phenylalanine 166. The Extracellular portion of the chain corresponds to threonine 167–isoleucine 198. A helical membrane pass occupies residues valine 199 to leucine 218. Topologically, residues lysine 219–arginine 235 are cytoplasmic. Residues leucine 236–phenylalanine 260 form a helical membrane-spanning segment. Residues glutamine 261–glutamine 277 lie on the Extracellular side of the membrane. Residues alanine 278–glycine 301 traverse the membrane as a helical segment. Over glutamate 302–leucine 352 the chain is Cytoplasmic. 3 S-palmitoyl cysteine lipidation sites follow: cysteine 321, cysteine 323, and cysteine 324. Phosphoserine; by BARK1 is present on residues serine 336, serine 337, serine 342, and serine 349.

Belongs to the G-protein coupled receptor 1 family. Interacts with PRAF2. Efficient ligand binding to CCL3/MIP-1alpha and CCL4/MIP-1beta requires sulfation, O-glycosylation and sialic acid modifications. Glycosylation on Ser-6 is required for efficient binding of CCL4. Interacts with GRK2. Interacts with ARRB1 and ARRB2. Interacts with CNIH4. Interacts with S100A4; this interaction stimulates T-lymphocyte chemotaxis. In terms of processing, sulfated on at least 2 of the N-terminal tyrosines. Sulfation is required for efficient binding of the chemokines, CCL3 and CCL4. Post-translationally, palmitoylation in the C-terminal is important for cell surface expression. Phosphorylation on serine residues in the C-terminal is stimulated by binding CC chemokines especially by APO-RANTES. In terms of processing, O-glycosylated, but not N-glycosylated. Ser-6 appears to be the major site even if Ser-7 may be also O-glycosylated. Also sialylated glycans present which contribute to chemokine binding. Thr-16 and Ser-17 may also be glycosylated and, if so, with small moieties such as a T-antigen.

The protein localises to the cell membrane. Receptor for a number of inflammatory CC-chemokines including CCL3/MIP-1-alpha, CCL4/MIP-1-beta and RANTES and subsequently transduces a signal by increasing the intracellular calcium ion level. May play a role in the control of granulocytic lineage proliferation or differentiation. Participates in T-lymphocyte migration to the infection site by acting as a chemotactic receptor. In Symphalangus syndactylus (Siamang), this protein is C-C chemokine receptor type 5 (CCR5).